A 249-amino-acid polypeptide reads, in one-letter code: MTATACYGIIPARYDSSRFPGKPLADIQGRPMFWHVWHRASLCPQLQQVVLATDDGRIAEAAHALDVPYVMTRSDHPSGTDRVFEAATLLQLDEDAVVVNIQGDEPALEPRMLSELVRPFAEDAAVQVTTLARAISPQQAACPDVVKVVCTAGGDALYFSRAAIPYCRDGQSGAPCMGHVGLYAFRYQALRRFTQLEQSVLERTEKLEQLRLLENNIPIRVVETAYRTHGVDRPGDIDVIINMIRENEG.

Belongs to the KdsB family.

It localises to the cytoplasm. It carries out the reaction 3-deoxy-alpha-D-manno-oct-2-ulosonate + CTP = CMP-3-deoxy-beta-D-manno-octulosonate + diphosphate. It functions in the pathway nucleotide-sugar biosynthesis; CMP-3-deoxy-D-manno-octulosonate biosynthesis; CMP-3-deoxy-D-manno-octulosonate from 3-deoxy-D-manno-octulosonate and CTP: step 1/1. It participates in bacterial outer membrane biogenesis; lipopolysaccharide biosynthesis. Its function is as follows. Activates KDO (a required 8-carbon sugar) for incorporation into bacterial lipopolysaccharide in Gram-negative bacteria. This chain is 3-deoxy-manno-octulosonate cytidylyltransferase, found in Oleidesulfovibrio alaskensis (strain ATCC BAA-1058 / DSM 17464 / G20) (Desulfovibrio alaskensis).